Consider the following 422-residue polypeptide: MILIKNAKILTPKGIVEGNLKVEGKKISEIGGKAVKSDVVIDGSRKAVIPGFFNTHTHAAMTLFRSYADDMQLHEWLEKKIWPLEAKLDDKAVYWGTKLACVEMLKSGTVFFNDMYFFPEAIARAAEECGIRACVSAAFFDFFNPDLLELNLKNAVKSLREIEKYDVLRAIGPHAVYTVSLDGLRRAAEIAEEMDIFMHFHLAETEKEVLDFKKQHGKLIVQALDEIGFLSKRLIAAHSVWLEDAEIEILAKKGVSVAHCPASNMKLCVGKAIRYEAMKRAGVNFTLATDGAASNNNLDMLEEMKFAALLQKFHHSNPTLLKAEEVFEAATLNGAKAFGIKSGVIKEGYEADIVLVDLAKPYMQPEHSLIANLVYAASSGCVDTVIVKGEVVVEGGVFRSEEEELKIIEKANEVAKRLTGSA.

Positions 56 and 58 each coordinate Zn(2+). Substrate is bound by residues Glu85 and His174. A Zn(2+)-binding site is contributed by His201. The substrate site is built by Glu204 and Asp290. Asp290 contributes to the Zn(2+) binding site.

The protein belongs to the metallo-dependent hydrolases superfamily. MTA/SAH deaminase family. It depends on Zn(2+) as a cofactor.

The catalysed reaction is S-adenosyl-L-homocysteine + H2O + H(+) = S-inosyl-L-homocysteine + NH4(+). It carries out the reaction S-methyl-5'-thioadenosine + H2O + H(+) = S-methyl-5'-thioinosine + NH4(+). Its function is as follows. Catalyzes the deamination of 5-methylthioadenosine and S-adenosyl-L-homocysteine into 5-methylthioinosine and S-inosyl-L-homocysteine, respectively. Is also able to deaminate adenosine. This Archaeoglobus fulgidus (strain ATCC 49558 / DSM 4304 / JCM 9628 / NBRC 100126 / VC-16) protein is 5-methylthioadenosine/S-adenosylhomocysteine deaminase 1.